The primary structure comprises 64 residues: uncharacterized protein (64 aa).

This is an uncharacterized protein from Enterobacteria phage T4 (Bacteriophage T4).